The primary structure comprises 55 residues: Large ribosomal subunit protein bL33 (55 aa).

It belongs to the bacterial ribosomal protein bL33 family.

The sequence is that of Large ribosomal subunit protein bL33 from Sinorhizobium fredii (strain NBRC 101917 / NGR234).